A 380-amino-acid polypeptide reads, in one-letter code: Queuine tRNA-ribosyltransferase (380 aa).

D96 (proton acceptor) is an active-site residue. Residues D96–F100, D150, Q193, and G220 each bind substrate. The RNA binding stretch occupies residues G251–S257. D270 functions as the Nucleophile in the catalytic mechanism. The RNA binding; important for wobble base 34 recognition stretch occupies residues T275 to R279. Residues C308, C310, C313, and H339 each contribute to the Zn(2+) site.

This sequence belongs to the queuine tRNA-ribosyltransferase family. As to quaternary structure, homodimer. Within each dimer, one monomer is responsible for RNA recognition and catalysis, while the other monomer binds to the replacement base PreQ1. Requires Zn(2+) as cofactor.

The catalysed reaction is 7-aminomethyl-7-carbaguanine + guanosine(34) in tRNA = 7-aminomethyl-7-carbaguanosine(34) in tRNA + guanine. The protein operates within tRNA modification; tRNA-queuosine biosynthesis. Its function is as follows. Catalyzes the base-exchange of a guanine (G) residue with the queuine precursor 7-aminomethyl-7-deazaguanine (PreQ1) at position 34 (anticodon wobble position) in tRNAs with GU(N) anticodons (tRNA-Asp, -Asn, -His and -Tyr). Catalysis occurs through a double-displacement mechanism. The nucleophile active site attacks the C1' of nucleotide 34 to detach the guanine base from the RNA, forming a covalent enzyme-RNA intermediate. The proton acceptor active site deprotonates the incoming PreQ1, allowing a nucleophilic attack on the C1' of the ribose to form the product. After dissociation, two additional enzymatic reactions on the tRNA convert PreQ1 to queuine (Q), resulting in the hypermodified nucleoside queuosine (7-(((4,5-cis-dihydroxy-2-cyclopenten-1-yl)amino)methyl)-7-deazaguanosine). This Streptococcus pyogenes serotype M6 (strain ATCC BAA-946 / MGAS10394) protein is Queuine tRNA-ribosyltransferase.